A 443-amino-acid chain; its full sequence is Chromosomal replication initiator protein DnaA (443 aa).

The segment at 1 to 73 (MYGDYRQIWE…YDAASKVTNR (73 aa)) is domain I, interacts with DnaA modulators. The domain II stretch occupies residues 73-106 (RFIEIKILSEDEEEYREIKESIERENSSESTLLS). The interval 107 to 323 (TLNPKYTFDT…GALIRIVAFA (217 aa)) is domain III, AAA+ region. The ATP site is built by Gly-151, Gly-153, Lys-154, and Thr-155. Residues 324–443 (TLTKSNIDLE…EELKKRIKGY (120 aa)) are domain IV, binds dsDNA.

The protein belongs to the DnaA family. As to quaternary structure, oligomerizes as a right-handed, spiral filament on DNA at oriC.

The protein localises to the cytoplasm. Functionally, plays an essential role in the initiation and regulation of chromosomal replication. ATP-DnaA binds to the origin of replication (oriC) to initiate formation of the DNA replication initiation complex once per cell cycle. Binds the DnaA box (a 9 base pair repeat at the origin) and separates the double-stranded (ds)DNA. Forms a right-handed helical filament on oriC DNA; dsDNA binds to the exterior of the filament while single-stranded (ss)DNA is stabiized in the filament's interior. The ATP-DnaA-oriC complex binds and stabilizes one strand of the AT-rich DNA unwinding element (DUE), permitting loading of DNA polymerase. After initiation quickly degrades to an ADP-DnaA complex that is not apt for DNA replication. Binds acidic phospholipids. The sequence is that of Chromosomal replication initiator protein DnaA from Caldanaerobacter subterraneus subsp. tengcongensis (strain DSM 15242 / JCM 11007 / NBRC 100824 / MB4) (Thermoanaerobacter tengcongensis).